The chain runs to 267 residues: MAEEVRQELSALAAIFCGPNEWEMLSCSETDGAVFRIHTTAEGLVGEDVPLELAFHLPVGYPLCLPGISVTSEHLTRAQCVTAKEKLLGEARKLVSEPMVHELVLWIQQNLRLVLSQPETVSSHEKCTLPESATGDDGPWMTLLRLDHMRARTKYVKAVEKWASELRLTGRLMFMGKLILILLQGDRSNIKEYLILQKTSKVDVDSSGKKCKEKMISVLSETKVQTEHKRFLAFEVKEYSTLEELQKEFGAAGLGELFSECVLGLVK.

The RWD domain maps to 7–114 (QELSALAAIF…LWIQQNLRLV (108 aa)). 2 interaction with UBE2I/UBC9 regions span residues 13 to 15 (AAI) and 100 to 102 (VHE).

In terms of assembly, interacts with UBE2I/UBC9, NFKBIA, HIF1A and NCOA2.

It localises to the nucleus. It is found in the cytoplasm. Functionally, enhancer of SUMO conjugation. Via its interaction with UBE2I/UBC9, increases SUMO conjugation to proteins by promoting the binding of E1 and E2 enzymes, thioester linkage between SUMO and UBE2I/UBC9 and transfer of SUMO to specific target proteins which include HIF1A, PIAS, NFKBIA, NR3C1 and TOP1. Positively regulates the NF-kappa-B signaling pathway by enhancing the sumoylation of NF-kappa-B inhibitor alpha (NFKBIA), promoting its stabilization which consequently leads to an increased inhibition of NF-kappa-B transcriptional activity. Negatively regulates the hypoxia-inducible factor-1 alpha (HIF1A) signaling pathway by increasing the sumoylation of HIF1A, promoting its stabilization, transcriptional activity and the expression of its target gene VEGFA during hypoxia. Has no effect on ubiquitination. In Mus musculus (Mouse), this protein is RWD domain-containing protein 3 (Rwdd3).